The following is a 157-amino-acid chain: ABA-responsive protein ABR17 (157 aa).

Belongs to the BetVI family.

This is ABA-responsive protein ABR17 from Pisum sativum (Garden pea).